The chain runs to 224 residues: Ribonuclease 3 (224 aa).

Positions 4 to 127 (IEKLERSLTY…IIGAIHLEAG (124 aa)) constitute an RNase III domain. Glu40 is a Mg(2+) binding site. Asp44 is a catalytic residue. 2 residues coordinate Mg(2+): Asp113 and Glu116. The active site involves Glu116. Positions 154-223 (DYKTKLQEIT…AKIALEKLGA (70 aa)) constitute a DRBM domain.

The protein belongs to the ribonuclease III family. Homodimer. Mg(2+) serves as cofactor.

It localises to the cytoplasm. The catalysed reaction is Endonucleolytic cleavage to 5'-phosphomonoester.. Its function is as follows. Digests double-stranded RNA. Involved in the processing of primary rRNA transcript to yield the immediate precursors to the large and small rRNAs (23S and 16S). Processes some mRNAs, and tRNAs when they are encoded in the rRNA operon. Processes pre-crRNA and tracrRNA of type II CRISPR loci if present in the organism. The polypeptide is Ribonuclease 3 (Campylobacter jejuni (strain RM1221)).